We begin with the raw amino-acid sequence, 412 residues long: Multifunctional CCA protein (412 aa).

ATP contacts are provided by Gly8 and Arg11. Residues Gly8 and Arg11 each contribute to the CTP site. Positions 21 and 23 each coordinate Mg(2+). ATP is bound by residues Arg91, Arg137, and Arg140. Residues Arg91, Arg137, and Arg140 each contribute to the CTP site. One can recognise an HD domain in the interval 228-329 (TGIHTLMTLS…VKLFDSIDAW (102 aa)).

This sequence belongs to the tRNA nucleotidyltransferase/poly(A) polymerase family. Bacterial CCA-adding enzyme type 1 subfamily. Monomer. Can also form homodimers and oligomers. Mg(2+) is required as a cofactor. The cofactor is Ni(2+).

The enzyme catalyses a tRNA precursor + 2 CTP + ATP = a tRNA with a 3' CCA end + 3 diphosphate. The catalysed reaction is a tRNA with a 3' CCA end + 2 CTP + ATP = a tRNA with a 3' CCACCA end + 3 diphosphate. Functionally, catalyzes the addition and repair of the essential 3'-terminal CCA sequence in tRNAs without using a nucleic acid template. Adds these three nucleotides in the order of C, C, and A to the tRNA nucleotide-73, using CTP and ATP as substrates and producing inorganic pyrophosphate. tRNA 3'-terminal CCA addition is required both for tRNA processing and repair. Also involved in tRNA surveillance by mediating tandem CCA addition to generate a CCACCA at the 3' terminus of unstable tRNAs. While stable tRNAs receive only 3'-terminal CCA, unstable tRNAs are marked with CCACCA and rapidly degraded. This Escherichia coli (strain SE11) protein is Multifunctional CCA protein.